A 466-amino-acid polypeptide reads, in one-letter code: Soluble pyridine nucleotide transhydrogenase (466 aa).

Residue 36 to 45 coordinates FAD; the sequence is ERYQNVGGGC.

It belongs to the class-I pyridine nucleotide-disulfide oxidoreductase family. The cofactor is FAD.

Its subcellular location is the cytoplasm. It carries out the reaction NAD(+) + NADPH = NADH + NADP(+). Conversion of NADPH, generated by peripheral catabolic pathways, to NADH, which can enter the respiratory chain for energy generation. The protein is Soluble pyridine nucleotide transhydrogenase of Shigella boydii serotype 18 (strain CDC 3083-94 / BS512).